Consider the following 833-residue polypeptide: MAFRATPGRTPPGPGPRSGIPSASFPSPQPPMAGPGGIEEEDEEEPAEIHLCVLWSSGYLGIAYYDTSDSTIHFMPDAPDHESLKLLQRVLDEINPQSVVTSAKQDEAMTRFLGKLASEEHREPKGPEIILLPSVDFGPEISKQRLLSGNYSFISDSMTATEKILFLSSIIPFDCVLTVRALGGLLKFLSRRRIGVELEDYDVGVPILGFKKFVLTHLVSIDQDTYSVLQIFKSESHPSVYKVASGLKEGLSLFGILNRCRCKWGQKLLRLWFTRPTRELRELNSRLDVIQFFLMPQNLDMAQMLHRLLSHIKNVPLILKRMKLSHTKVSDWQVLYKTVYSALGLRDACRSLPQSIQLFQDIAQEFSDDLHHIASLIGKVVDFEESLAENRFTVLPNIDPDIDAKKRRLIGLPSFLTEVAQKELENLDSRIPSCSVIYIPLIGFLLSIPRLPFMVEASDFEIEGLDFMFLSEDKLHYRSARTKELDTLLGDLHCEIRDQETLLMYQLQCQVLARASVLTRVLDLASRLDVLLALASAARDYGYSRPHYSPCIHGVRIRNGRHPLMELCARTFVPNSTDCGGDQGRVKVITGPNSSGKSIYLKQVGLITFMALVGSFVPAEEAEIGVIDAIFTRIHSCESISLGLSTFMIDLNQVAKAVNNATEHSLVLIDEFGKGTNSVDGLALLAAVLRHWLALGPSCPHVFVATNFLSLVQLQLLPQGPLVQYLTMETCEDGEDLVFFYQLCQGVASASHASHTAAQAGLPDPLIARGKEVSDLIRSGKPIKATNELLRRNQMENCQALVDKFLKLDLEDPTLDLDIFISQEVLPAAPTIL.

Residues 1-45 (MAFRATPGRTPPGPGPRSGIPSASFPSPQPPMAGPGGIEEEDEEE) form a disordered region. An ATP-binding site is contributed by 591 to 598 (GPNSSGKS).

Belongs to the DNA mismatch repair MutS family. Heterooligomer of MSH4 and MSH5. Interacts with HJURP. Interacts with REDIC1.

Its function is as follows. Involved in DNA mismatch repair and meiotic recombination processes. Facilitates crossovers between homologs during meiosis. This chain is MutS protein homolog 5 (Msh5), found in Mus musculus (Mouse).